The following is a 333-amino-acid chain: Viral cathepsin (333 aa).

An N-terminal signal peptide occupies residues 1–20 (MTKLLNFVILASVLTVTAHA). The propeptide at 21–124 (LTYDLNNSDE…VIKDEPQALL (104 aa)) is activation peptide. 3 cysteine pairs are disulfide-bonded: Cys-145-Cys-186, Cys-179-Cys-219, and Cys-272-Cys-321. Cys-148 is an active-site residue. Residue Asn-170 is glycosylated (N-linked (GlcNAc...) asparagine; by host). Catalysis depends on residues His-280 and Asn-300.

This sequence belongs to the peptidase C1 family. In terms of processing, synthesized as an inactive proenzyme and activated by proteolytic removal of the inhibitory propeptide.

It catalyses the reaction Endopeptidase of broad specificity, hydrolyzing substrates of both cathepsin L and cathepsin B.. Its function is as follows. Cysteine protease that plays an essential role in host liquefaction to facilitate horizontal transmission of the virus. May participate in the degradation of foreign protein expressed by the baculovirus system. This chain is Viral cathepsin (VCATH), found in Cydia pomonella granulosis virus (isolate Mexico/1963) (CpGV).